We begin with the raw amino-acid sequence, 141 residues long: Ribonuclease VapC2 (141 aa).

One can recognise a PINc domain in the interval 7–129 (LIDKSALVRL…FDAIAALTGQ (123 aa)). Mg(2+)-binding residues include aspartate 99, aspartate 117, and aspartate 119.

This sequence belongs to the PINc/VapC protein family. As to quaternary structure, probably active as a homodimer. It depends on Mg(2+) as a cofactor.

Functionally, toxic component of a type II toxin-antitoxin (TA) system. Acts as an RNase. All its toxic effects are neutralized by coexpression with cognate antitoxin VapB2. This chain is Ribonuclease VapC2, found in Mycobacterium tuberculosis (strain CDC 1551 / Oshkosh).